Reading from the N-terminus, the 466-residue chain is MASEGDKLMGGRFVGSTDPIMQMLSTSISTEQRLSEVDIQASIAYAKALEKAGILTKTELEKILSGLEKISEELSKGVIVVTQSDEDIQTANERRLKELIGDIAGKLHTGRSRNEQVVTDLKLFMKNSLSIISTHLLQLIKTLVERAAIEIDVILPGYTHLQKAQPIRWSQFLLSHAVALTRDSERLGEVKKRINVLPLGSGALAGNPLDIDREMLRSELEFASISLNSMDAISERDFVVEFLSVATLLLIHLSKMAEDLIIYSTSEFGFLTLSDAFSTGSSLMPQKKNPDSLELIRSKAGRVFGRLASILMVLKGLPSTYNKDLQEDKEAVIDVVDTLTAVLQVATGVISTLQISKENMEKALTPEMLATDLALYLVRKGMPFRQAHTASGKAVHLAETKGIAINNLTLEDLKSISPLFSSDVSQVFNFVNSVEQYTALGGTAKSSVTTQIEQLRELMKKQKEQA.

This sequence belongs to the lyase 1 family. Argininosuccinate lyase subfamily. Homotetramer. Eye lens.

Delta crystallin, the principal crystallin in embryonic lens, is found only in birds and reptiles. Despite possessing the necessary catalytic residues, this protein does not function as an enzymatically active argininosuccinate lyase. The chain is Delta-1 crystallin (ASL1) from Anas platyrhynchos (Mallard).